The primary structure comprises 167 residues: Endoribonuclease YbeY (167 aa).

Zn(2+)-binding residues include His126, His130, and His136.

This sequence belongs to the endoribonuclease YbeY family. The cofactor is Zn(2+).

It localises to the cytoplasm. Single strand-specific metallo-endoribonuclease involved in late-stage 70S ribosome quality control and in maturation of the 3' terminus of the 16S rRNA. The sequence is that of Endoribonuclease YbeY from Novosphingobium aromaticivorans (strain ATCC 700278 / DSM 12444 / CCUG 56034 / CIP 105152 / NBRC 16084 / F199).